The primary structure comprises 259 residues: Proteasome subunit alpha (259 aa).

The tract at residues 222–259 (RITGPALEQLIPAEPAPASEPAPESKPDTETKPADPQD) is disordered. The span at 244-259 (PESKPDTETKPADPQD) shows a compositional bias: basic and acidic residues.

The protein belongs to the peptidase T1A family. As to quaternary structure, the 20S proteasome core is composed of 14 alpha and 14 beta subunits that assemble into four stacked heptameric rings, resulting in a barrel-shaped structure. The two inner rings, each composed of seven catalytic beta subunits, are sandwiched by two outer rings, each composed of seven alpha subunits. The catalytic chamber with the active sites is on the inside of the barrel. Has a gated structure, the ends of the cylinder being occluded by the N-termini of the alpha-subunits. Is capped by the proteasome-associated ATPase, ARC.

The protein resides in the cytoplasm. The protein operates within protein degradation; proteasomal Pup-dependent pathway. With respect to regulation, the formation of the proteasomal ATPase ARC-20S proteasome complex, likely via the docking of the C-termini of ARC into the intersubunit pockets in the alpha-rings, may trigger opening of the gate for substrate entry. Interconversion between the open-gate and close-gate conformations leads to a dynamic regulation of the 20S proteasome proteolysis activity. Functionally, component of the proteasome core, a large protease complex with broad specificity involved in protein degradation. This is Proteasome subunit alpha from Rhodococcus jostii (strain RHA1).